The chain runs to 427 residues: 3-phosphoshikimate 1-carboxyvinyltransferase (427 aa).

3-phosphoshikimate-binding residues include Lys22, Ser23, and Arg27. Lys22 is a phosphoenolpyruvate binding site. Phosphoenolpyruvate is bound by residues Gly96 and Arg124. 3-phosphoshikimate contacts are provided by Ser169, Ser170, Gln171, Ser197, Asp313, Asn336, and Lys340. Position 171 (Gln171) interacts with phosphoenolpyruvate. Asp313 (proton acceptor) is an active-site residue. Phosphoenolpyruvate contacts are provided by Arg344, Arg386, and Lys411.

Belongs to the EPSP synthase family. As to quaternary structure, monomer.

Its subcellular location is the cytoplasm. The enzyme catalyses 3-phosphoshikimate + phosphoenolpyruvate = 5-O-(1-carboxyvinyl)-3-phosphoshikimate + phosphate. It participates in metabolic intermediate biosynthesis; chorismate biosynthesis; chorismate from D-erythrose 4-phosphate and phosphoenolpyruvate: step 6/7. Its function is as follows. Catalyzes the transfer of the enolpyruvyl moiety of phosphoenolpyruvate (PEP) to the 5-hydroxyl of shikimate-3-phosphate (S3P) to produce enolpyruvyl shikimate-3-phosphate and inorganic phosphate. This Enterobacter sp. (strain 638) protein is 3-phosphoshikimate 1-carboxyvinyltransferase.